The following is a 152-amino-acid chain: Small ribosomal subunit protein uS19z (152 aa).

The protein belongs to the universal ribosomal protein uS19 family.

The protein resides in the cytoplasm. In Arabidopsis thaliana (Mouse-ear cress), this protein is Small ribosomal subunit protein uS19z (RPS15B).